A 208-amino-acid chain; its full sequence is Thymidylate kinase (208 aa).

Position 10–17 (G10–T17) interacts with ATP.

This sequence belongs to the thymidylate kinase family.

The enzyme catalyses dTMP + ATP = dTDP + ADP. In terms of biological role, phosphorylation of dTMP to form dTDP in both de novo and salvage pathways of dTTP synthesis. The chain is Thymidylate kinase from Listeria monocytogenes serotype 4a (strain HCC23).